Reading from the N-terminus, the 177-residue chain is Nucleoside triphosphate/diphosphate phosphatase (177 aa).

Arg23 serves as the catalytic Proton donor. Positions 87, 103, 105, 107, 120, and 123 each coordinate Mg(2+).

The protein belongs to the Ntdp family. Mg(2+) serves as cofactor.

The catalysed reaction is a ribonucleoside 5'-triphosphate + H2O = a ribonucleoside 5'-diphosphate + phosphate + H(+). The enzyme catalyses a ribonucleoside 5'-diphosphate + H2O = a ribonucleoside 5'-phosphate + phosphate + H(+). In terms of biological role, has nucleoside phosphatase activity towards nucleoside triphosphates and nucleoside diphosphates. This chain is Nucleoside triphosphate/diphosphate phosphatase, found in Streptococcus agalactiae serotype Ia (strain ATCC 27591 / A909 / CDC SS700).